A 330-amino-acid chain; its full sequence is Tryptophan--tRNA ligase (330 aa).

Residues 9–11 (QPT) and 17–18 (GN) contribute to the ATP site. The short motif at 10 to 18 (PTGDPHIGN) is the 'HIGH' region element. Residue Asp136 participates in L-tryptophan binding. Residues 148–150 (GED), Ile187, and 195–199 (KMSKS) each bind ATP. A 'KMSKS' region motif is present at residues 195–199 (KMSKS).

The protein belongs to the class-I aminoacyl-tRNA synthetase family. Homodimer.

The protein resides in the cytoplasm. It catalyses the reaction tRNA(Trp) + L-tryptophan + ATP = L-tryptophyl-tRNA(Trp) + AMP + diphosphate + H(+). Its function is as follows. Catalyzes the attachment of tryptophan to tRNA(Trp). The protein is Tryptophan--tRNA ligase of Deinococcus radiodurans (strain ATCC 13939 / DSM 20539 / JCM 16871 / CCUG 27074 / LMG 4051 / NBRC 15346 / NCIMB 9279 / VKM B-1422 / R1).